The chain runs to 942 residues: Netrin receptor UNC5B-b (942 aa).

Residues 1–30 form the signal peptide; sequence MYLSRIPGGAALAALLVALLLCCNFPPSIA. Residues 31 to 380 are Extracellular-facing; the sequence is GIEYSDVLPD…LESTGDVALY (350 aa). The 98-residue stretch at 51–148 folds into the Ig-like domain; the sequence is PHFLLEPEDA…AGTTKSKRSY (98 aa). Cystine bridges form between Cys72-Cys133, Cys84-Cys131, Cys177-Cys228, Cys261-Cys298, Cys265-Cys302, Cys276-Cys288, Cys317-Cys351, Cys321-Cys356, and Cys329-Cys341. Positions 150 to 245 constitute an Ig-like C2-type domain; the sequence is RIAYLRKNFD…KRRSTTATVI (96 aa). N-linked (GlcNAc...) asparagine glycosylation is present at Asn225. TSP type-1 domains lie at 249 to 303 and 305 to 357; these read NGGW…TMCP and DGGW…GLCM. An N-linked (GlcNAc...) asparagine glycan is attached at Asn350. The helical transmembrane segment at 381 to 401 threads the bilayer; the sequence is AGLVVAIFIIIILLMAVGIVV. Residues 402-942 lie on the Cytoplasmic side of the membrane; sequence YRRNCREFDT…MLVMATDGDC (541 aa). The region spanning 541–684 is the ZU5 domain; it reads NSVTGTFGSL…LGTYAFVGES (144 aa). The tract at residues 687-835 is UPA domain; that stretch reads RSAIKRLQLA…LEENVKSFDP (149 aa). Residues 863–940 enclose the Death domain; the sequence is ICNSLDAPNS…EMMLVMATDG (78 aa).

Belongs to the unc-5 family. Interacts (via extracellular domain) with flrt3 (via extracellular domain). Interacts with rnd1.

Its subcellular location is the cell membrane. Its function is as follows. Plays a role in cell-cell adhesion during embryonic development. Receptor for netrin required for axon guidance. Mediates axon repulsion of neuronal growth cones in the developing nervous system upon ligand binding. The polypeptide is Netrin receptor UNC5B-b (Xenopus laevis (African clawed frog)).